The sequence spans 777 residues: 1,4-alpha-glucan branching enzyme GlgB (777 aa).

Asp-408 serves as the catalytic Nucleophile. Residue Glu-461 is the Proton donor of the active site.

This sequence belongs to the glycosyl hydrolase 13 family. GlgB subfamily. In terms of assembly, monomer.

It catalyses the reaction Transfers a segment of a (1-&gt;4)-alpha-D-glucan chain to a primary hydroxy group in a similar glucan chain.. Its pathway is glycan biosynthesis; glycogen biosynthesis. Its function is as follows. Catalyzes the formation of the alpha-1,6-glucosidic linkages in glycogen by scission of a 1,4-alpha-linked oligosaccharide from growing alpha-1,4-glucan chains and the subsequent attachment of the oligosaccharide to the alpha-1,6 position. This chain is 1,4-alpha-glucan branching enzyme GlgB, found in Actinobacillus pleuropneumoniae serotype 3 (strain JL03).